Reading from the N-terminus, the 602-residue chain is MFKRPSFLRRQRHTVGRDDWSAFPVRQLFVLALCRICEPIAFMSIFPYVYHMVEAFKVTDDDHKIALYAGLITSSFTFAEFSAGMFWGRMSDKIGRKPVLIMGLIGTAISMIVFGFAPNLPTAMVARALGGLLNGNIGVLQTTVAEIVTVKEHQPRAYSIMPFVWCLGSIIGPAMGGALAQPCQNYPGLFQRHTIFDSFPFLLPNLVCVVVLVFGVIVGFLFLEETHPEKRYRRDPGLELGNWLIARCSGSRVQLTEDDTDIKVDANEADYFNYGDVPPPEYRSTETSPQLAPIKNVGALSGDDDIEGQVKGEQCGTPKAFTKQVIFNIVAYGILAYHSVSFDQLIPVFLSTPKSDDNFVLPFKFTGGLGLPTKTIGFMLAVQGVYSMIAQLWLFPFVVRHFGTLRTFRLVLLVWPPLYMLVPYLVLLPSILQTAAVYLALISKITLHVIAFPSTAILLANAAPSSKVLGSINGAAASTASLSRALGPTITGLLHSKGLESGYSIIAWWACGLVCVTGTIQSFWMEESEPRRDSEKAGNSDSTAGIPMRSSFPAGKEYATPEEERRLLSSTRTSVDDLDISNLDLTQIEPAPRSNPLAFAED.

Helical transmembrane passes span Phe-29–Val-49, Leu-67–Trp-87, Pro-98–Pro-118, Ala-128–Val-148, Ile-160–Ala-180, Phe-201–Leu-221, Ile-329–Phe-349, Phe-378–Val-398, Val-411–Ile-431, Leu-439–Leu-459, Val-468–Leu-486, and Ile-505–Met-525. A disordered region spans residues Glu-527–Asp-602. Residues Ser-528–Gly-538 show a composition bias toward basic and acidic residues.

It belongs to the major facilitator superfamily.

It localises to the membrane. Its function is as follows. Major facilitator superfamily transporter that may be involved in A.fumigatus adaptation to azoles such as vorizonazole. The polypeptide is Major facilitator superfamily multidrug transporter mfsB (Aspergillus fumigatus (strain ATCC MYA-4609 / CBS 101355 / FGSC A1100 / Af293) (Neosartorya fumigata)).